Here is an 87-residue protein sequence, read N- to C-terminus: uncharacterized protein (87 aa).

The tract at residues 67 to 87 (TGGDPREAVVRPADQVEGYTG) is disordered.

This is an uncharacterized protein from Mycobacterium bovis (strain ATCC BAA-935 / AF2122/97).